The primary structure comprises 151 residues: MELDIKGIMDRLPHRYPMLLIDRVLEMVPGKSIVAIKNVSINEPFFTGHFPHHPVMPGVLIVEAMAQASALFSFTDENGGLKCDGAKTAYYLVGIDGARFRKPVVPGDQLRLEVEAERLSCTICKYQGRALVDGQLVAEAKLMCAIRSLEE.

His49 is a catalytic residue.

The protein belongs to the thioester dehydratase family. FabZ subfamily.

It localises to the cytoplasm. It carries out the reaction a (3R)-hydroxyacyl-[ACP] = a (2E)-enoyl-[ACP] + H2O. Involved in unsaturated fatty acids biosynthesis. Catalyzes the dehydration of short chain beta-hydroxyacyl-ACPs and long chain saturated and unsaturated beta-hydroxyacyl-ACPs. The sequence is that of 3-hydroxyacyl-[acyl-carrier-protein] dehydratase FabZ from Bordetella parapertussis (strain 12822 / ATCC BAA-587 / NCTC 13253).